Here is a 278-residue protein sequence, read N- to C-terminus: S-methyl-5'-thioadenosine phosphorylase (278 aa).

Residues S13, 55-56 (RH), and 88-89 (TA) contribute to the phosphate site. Residue M190 coordinates substrate. T191 lines the phosphate pocket. 214-216 (DYD) serves as a coordination point for substrate.

It belongs to the PNP/MTAP phosphorylase family. MTAP subfamily. Homotrimer.

It is found in the cytoplasm. Its subcellular location is the nucleus. It carries out the reaction S-methyl-5'-thioadenosine + phosphate = 5-(methylsulfanyl)-alpha-D-ribose 1-phosphate + adenine. It functions in the pathway amino-acid biosynthesis; L-methionine biosynthesis via salvage pathway; S-methyl-5-thio-alpha-D-ribose 1-phosphate from S-methyl-5'-thioadenosine (phosphorylase route): step 1/1. Its function is as follows. Catalyzes the reversible phosphorylation of S-methyl-5'-thioadenosine (MTA) to adenine and 5-methylthioribose-1-phosphate. Involved in the breakdown of MTA, a major by-product of polyamine biosynthesis. Responsible for the first step in the methionine salvage pathway after MTA has been generated from S-adenosylmethionine. Has broad substrate specificity with 6-aminopurine nucleosides as preferred substrates. This is S-methyl-5'-thioadenosine phosphorylase from Anopheles gambiae (African malaria mosquito).